The primary structure comprises 326 residues: Probable magnesium transporter NIPA7 (326 aa).

At M1–D4 the chain is on the extracellular side. The chain crosses the membrane as a helical span at residues N5–L25. The Cytoplasmic portion of the chain corresponds to K26–P51. Residues L52–V72 traverse the membrane as a helical segment. Topologically, residues Y73 to A76 are extracellular. The helical transmembrane segment at V77–L97 threads the bilayer. Residues L98–K104 lie on the Cytoplasmic side of the membrane. Residues M105–P125 traverse the membrane as a helical segment. Residues Q126–Q142 are Extracellular-facing. Residues P143–C163 traverse the membrane as a helical segment. Residues E164–Q169 are Cytoplasmic-facing. A helical membrane pass occupies residues T170–I190. At K191 to Y209 the chain is on the extracellular side. Residues P210–L230 form a helical membrane-spanning segment. Topologically, residues N231–A240 are cytoplasmic. A helical membrane pass occupies residues I241–M261. Topologically, residues F262–S272 are extracellular. A helical transmembrane segment spans residues I273–T293. Residues R294–Y326 lie on the Cytoplasmic side of the membrane.

It belongs to the NIPA (TC 2.A.7) family. In terms of assembly, homodimer.

It localises to the cell membrane. It is found in the early endosome. Functionally, acts as a Mg(2+) transporter. Can also transport other divalent cations such as Fe(2+), Sr(2+), Ba(2+), Mn(2+) and Co(2+) but to a much less extent than Mg(2+). In Arabidopsis thaliana (Mouse-ear cress), this protein is Probable magnesium transporter NIPA7.